A 600-amino-acid polypeptide reads, in one-letter code: Cytidine monophosphate-N-acetylneuraminic acid hydroxylase (600 aa).

The Rieske domain maps to 9 to 107; that stretch reads LSPVEVASLK…VEMDENNRLL (99 aa). Positions 49, 51, 70, and 73 each coordinate [2Fe-2S] cluster.

It belongs to the CMP-Neu5Ac hydroxylase family. Requires [2Fe-2S] cluster as cofactor.

Its subcellular location is the cytoplasm. The enzyme catalyses CMP-N-acetyl-beta-neuraminate + 2 Fe(II)-[cytochrome b5] + O2 + 2 H(+) = CMP-N-glycoloyl-beta-neuraminate + 2 Fe(III)-[cytochrome b5] + H2O. The protein operates within amino-sugar metabolism; N-acetylneuraminate metabolism. Functionally, sialic acids are components of carbohydrate chains of glycoconjugates and are involved in cell-cell recognition and cell-pathogen interactions. Catalyzes the conversion of CMP-N-acetylneuraminic acid (CMP-Neu5Ac) into its hydroxylated derivative CMP-N-glycolylneuraminic acid (CMP-Neu5Gc), a sialic acid abundantly expressed at the surface of many cells. This chain is Cytidine monophosphate-N-acetylneuraminic acid hydroxylase (CMAH), found in Gorilla gorilla gorilla (Western lowland gorilla).